The chain runs to 362 residues: Probable protein phosphatase 2C 11 (362 aa).

The region spanning 23–329 is the PPM-type phosphatase domain; it reads KLGLSSMQGW…DNMTMVLVQF (307 aa). Positions 57, 58, 272, and 320 each coordinate Mn(2+).

It belongs to the PP2C family. The cofactor is Mg(2+). Mn(2+) is required as a cofactor.

It carries out the reaction O-phospho-L-seryl-[protein] + H2O = L-seryl-[protein] + phosphate. The catalysed reaction is O-phospho-L-threonyl-[protein] + H2O = L-threonyl-[protein] + phosphate. In Oryza sativa subsp. japonica (Rice), this protein is Probable protein phosphatase 2C 11.